The sequence spans 201 residues: Cell division protein SepF (201 aa).

The segment at 1–94 (MALKDLFSGF…TTSKNNARNV (94 aa)) is disordered. Positions 13-28 (VEEEDDELEAPPEENE) are enriched in acidic residues. Low complexity predominate over residues 35–44 (PKQQAQSQNQ). Over residues 59–88 (SIQSVPKKQSTRLQQSSGERKYQMNNTTSK) the composition is skewed to polar residues.

This sequence belongs to the SepF family. Homodimer. Interacts with FtsZ.

Its subcellular location is the cytoplasm. In terms of biological role, cell division protein that is part of the divisome complex and is recruited early to the Z-ring. Probably stimulates Z-ring formation, perhaps through the cross-linking of FtsZ protofilaments. Its function overlaps with FtsA. The polypeptide is Cell division protein SepF (Staphylococcus saprophyticus subsp. saprophyticus (strain ATCC 15305 / DSM 20229 / NCIMB 8711 / NCTC 7292 / S-41)).